The primary structure comprises 101 residues: NAD(P)H-quinone oxidoreductase subunit 4L, chloroplastic (101 aa).

The next 3 membrane-spanning stretches (helical) occupy residues 2 to 22 (ILEHVLVLSAYLFLIGLYGLI), 32 to 52 (MCLELILNAVNMNFVTFSDFF), and 61 to 81 (IFCIFVIAIAAAEAAIGLAIV).

Belongs to the complex I subunit 4L family. In terms of assembly, NDH is composed of at least 16 different subunits, 5 of which are encoded in the nucleus.

Its subcellular location is the plastid. The protein localises to the chloroplast thylakoid membrane. The catalysed reaction is a plastoquinone + NADH + (n+1) H(+)(in) = a plastoquinol + NAD(+) + n H(+)(out). The enzyme catalyses a plastoquinone + NADPH + (n+1) H(+)(in) = a plastoquinol + NADP(+) + n H(+)(out). NDH shuttles electrons from NAD(P)H:plastoquinone, via FMN and iron-sulfur (Fe-S) centers, to quinones in the photosynthetic chain and possibly in a chloroplast respiratory chain. The immediate electron acceptor for the enzyme in this species is believed to be plastoquinone. Couples the redox reaction to proton translocation, and thus conserves the redox energy in a proton gradient. The polypeptide is NAD(P)H-quinone oxidoreductase subunit 4L, chloroplastic (Crucihimalaya wallichii (Rock-cress)).